A 242-amino-acid polypeptide reads, in one-letter code: Outer membrane protein class 4 (242 aa).

The signal sequence occupies residues 1–22 (MTKQLKLSALFVALLASGTAVA). 7 repeat units span residues 69 to 70 (AP), 71 to 72 (EP), 73 to 74 (EP), 75 to 76 (EP), 77 to 78 (EP), 79 to 80 (AP), and 81 to 82 (AP). Residues 69–82 (APEPEPEPEPAPAP) form a 7 X 2 AA tandem repeats of X-P region. The region spanning 92–229 (YVDETISLSA…RVDVKIRSIV (138 aa)) is the OmpA-like domain. An intrachain disulfide couples Cys191 to Cys214.

The protein belongs to the outer membrane OOP (TC 1.B.6) superfamily.

The protein resides in the cell outer membrane. The sequence is that of Outer membrane protein class 4 (rmpM) from Neisseria meningitidis serogroup A / serotype 4A (strain DSM 15465 / Z2491).